Here is a 193-residue protein sequence, read N- to C-terminus: Phosphoheptose isomerase (193 aa).

Residues 37 to 193 (LADSFKAGGK…QLIEKEMVKA (157 aa)) enclose the SIS domain. 52 to 54 (NGG) serves as a coordination point for substrate. Zn(2+)-binding residues include His61 and Glu65. Residues Glu65, 93-94 (ND), 119-121 (STS), Ser124, and Gln172 contribute to the substrate site. Zn(2+) is bound by residues Gln172 and His180.

It belongs to the SIS family. GmhA subfamily. As to quaternary structure, homotetramer. Requires Zn(2+) as cofactor.

Its subcellular location is the cytoplasm. It catalyses the reaction 2 D-sedoheptulose 7-phosphate = D-glycero-alpha-D-manno-heptose 7-phosphate + D-glycero-beta-D-manno-heptose 7-phosphate. It functions in the pathway carbohydrate biosynthesis; D-glycero-D-manno-heptose 7-phosphate biosynthesis; D-glycero-alpha-D-manno-heptose 7-phosphate and D-glycero-beta-D-manno-heptose 7-phosphate from sedoheptulose 7-phosphate: step 1/1. Its function is as follows. Catalyzes the isomerization of sedoheptulose 7-phosphate in D-glycero-D-manno-heptose 7-phosphate. The protein is Phosphoheptose isomerase of Serratia proteamaculans (strain 568).